We begin with the raw amino-acid sequence, 353 residues long: Chorismate synthase (353 aa).

R48 contributes to the NADP(+) binding site. FMN is bound by residues 125–127 (RSS), 238–239 (NA), G278, 293–297 (KPTSS), and R319.

It belongs to the chorismate synthase family. As to quaternary structure, homotetramer. The cofactor is FMNH2.

It catalyses the reaction 5-O-(1-carboxyvinyl)-3-phosphoshikimate = chorismate + phosphate. It participates in metabolic intermediate biosynthesis; chorismate biosynthesis; chorismate from D-erythrose 4-phosphate and phosphoenolpyruvate: step 7/7. In terms of biological role, catalyzes the anti-1,4-elimination of the C-3 phosphate and the C-6 proR hydrogen from 5-enolpyruvylshikimate-3-phosphate (EPSP) to yield chorismate, which is the branch point compound that serves as the starting substrate for the three terminal pathways of aromatic amino acid biosynthesis. This reaction introduces a second double bond into the aromatic ring system. The protein is Chorismate synthase of Buchnera aphidicola subsp. Cinara cedri (strain Cc).